The sequence spans 430 residues: WD repeat-containing protein jip5 (430 aa).

WD repeat units lie at residues 9-48 (PLSSELFTQALHPTEPILSVGLSSGHVQCFRLPAAEAAAE), 72-111 (RHKGSCRTLGYNHDGEVLYSAGTDSLLKAAASSTGQVTSK), 117-158 (TNTD…SFKS), 215-262 (DQEE…DQSE), 272-318 (AGGE…GVVE), and 323-360 (DDIEAVVAVGFDVEGRLISGGGDTVKVWQEKVEEEEEE). A compositionally biased stretch (acidic residues) spans 356 to 374 (EEEEEEEEEEQEDIEDNDD). The tract at residues 356–430 (EEEEEEEEEE…NGILKFKGME (75 aa)) is disordered. Residues 382 to 397 (HALERDSDDSDARADS) are compositionally biased toward basic and acidic residues. Basic residues predominate over residues 405–416 (RKKRKKKKKGKK).

The protein belongs to the WD repeat WDR55 family.

Its subcellular location is the nucleus. The protein localises to the nucleolus. The polypeptide is WD repeat-containing protein jip5 (jip5) (Botryotinia fuckeliana (strain B05.10) (Noble rot fungus)).